The following is a 273-amino-acid chain: Photosystem I chlorophyll a/b-binding protein 3-1, chloroplastic (273 aa).

Residues 1–39 (MAAQALVSSSLTSSVQTARQIFGSKPVASASQKKSSFVV) constitute a chloroplast transit peptide. Position 56 (Trp56) interacts with chlorophyll b. Chlorophyll a contacts are provided by Phe76, Ser82, and Glu100. Arg105 is a chlorophyll b binding site. A helical transmembrane segment spans residues 106–126 (FAMLGAAGAIAPEILGKAGLI). Position 140 (Ile140) interacts with chlorophyll b. The helical transmembrane segment at 146–166 (YTYWADNYTLFVLEMALMGFA) threads the bilayer. Residues Glu167 and Arg170 each coordinate chlorophyll b. A Phosphoserine modification is found at Ser195. Positions 224, 225, 228, 230, 242, and 257 each coordinate chlorophyll a. The helical transmembrane segment at 231 to 251 (LAMLAILGYFIQGLVTGVGPY) threads the bilayer. Residue Phe272 coordinates chlorophyll b.

It belongs to the light-harvesting chlorophyll a/b-binding (LHC) protein family. In terms of assembly, the LHC complex consists of chlorophyll a-b binding proteins. Red-emitting heterodimer with LHCA2. Interacts with LHCA5. Binds to carotenoids. It depends on Binds at least 14 chlorophylls (8 Chl-a and 6 Chl-b) and carotenoids such as lutein and neoxanthin. as a cofactor. In terms of processing, photoregulated by reversible phosphorylation of its threonine residues.

Its subcellular location is the plastid. The protein localises to the chloroplast thylakoid membrane. Its function is as follows. The light-harvesting complex (LHC) functions as a light receptor, it captures and delivers excitation energy to photosystems with which it is closely associated, here photosystem I. The sequence is that of Photosystem I chlorophyll a/b-binding protein 3-1, chloroplastic from Arabidopsis thaliana (Mouse-ear cress).